The primary structure comprises 340 residues: S-adenosylmethionine:tRNA ribosyltransferase-isomerase (340 aa).

The protein belongs to the QueA family. As to quaternary structure, monomer.

The protein localises to the cytoplasm. It carries out the reaction 7-aminomethyl-7-carbaguanosine(34) in tRNA + S-adenosyl-L-methionine = epoxyqueuosine(34) in tRNA + adenine + L-methionine + 2 H(+). It functions in the pathway tRNA modification; tRNA-queuosine biosynthesis. Its function is as follows. Transfers and isomerizes the ribose moiety from AdoMet to the 7-aminomethyl group of 7-deazaguanine (preQ1-tRNA) to give epoxyqueuosine (oQ-tRNA). This chain is S-adenosylmethionine:tRNA ribosyltransferase-isomerase, found in Aliarcobacter butzleri (strain RM4018) (Arcobacter butzleri).